The chain runs to 310 residues: Haloalkane dehalogenase (310 aa).

In terms of domain architecture, AB hydrolase-1 spans Pro-30–His-140. The active-site Nucleophile is the Asp-103. The active-site Proton donor is Glu-127. His-280 serves as the catalytic Proton acceptor.

It belongs to the haloalkane dehalogenase family. Type 2 subfamily. As to quaternary structure, monomer.

The catalysed reaction is 1-haloalkane + H2O = a halide anion + a primary alcohol + H(+). Functionally, catalyzes hydrolytic cleavage of carbon-halogen bonds in halogenated aliphatic compounds, leading to the formation of the corresponding primary alcohols, halide ions and protons. The protein is Haloalkane dehalogenase of Bradyrhizobium diazoefficiens (strain JCM 10833 / BCRC 13528 / IAM 13628 / NBRC 14792 / USDA 110).